Consider the following 685-residue polypeptide: ATP-dependent zinc metalloprotease FTSH 8, chloroplastic (685 aa).

The transit peptide at 1–37 (MAASSACLLGNGLSVYTTKQRFQKLGLDRTSKVTVVK) directs the protein to the chloroplast. A thylakoid-targeting transit peptide spans 38–73 (ASLDEKKHEGRRGFFKLLLGNAAAGVGLLASGNANA). Topologically, residues 38 to 161 (ASLDEKKHEG…HNAQEDQGSP (124 aa)) are lumenal, thylakoid. A helical membrane pass occupies residues 162–182 (ILNLIGNLAFPVILIGGLFLL). Residues 183–685 (SRRSSGGMGG…STSTPTPASV (503 aa)) lie on the Stromal side of the membrane. Position 260–267 (260–267 (GPPGTGKT)) interacts with ATP. H481 is a binding site for Zn(2+). E482 is an active-site residue. The Zn(2+) site is built by H485 and D559.

It in the N-terminal section; belongs to the AAA ATPase family. This sequence in the C-terminal section; belongs to the peptidase M41 family. As to quaternary structure, heterohexamers with FTSH1, FTSH2 and FTSH5. May also form homooligomers. Zn(2+) serves as cofactor. In terms of tissue distribution, expressed in cotyledons, cauline and rosette leaves, stems, sepals, flovers and siliques. Very low in roots.

The protein resides in the plastid. The protein localises to the chloroplast thylakoid membrane. In terms of biological role, part of a complex that function as an ATP-dependent zinc metallopeptidase. Involved in the thylakoid formation and in the removal of damaged D1 in the photosystem II, preventing cell death under high-intensity light conditions. This Arabidopsis thaliana (Mouse-ear cress) protein is ATP-dependent zinc metalloprotease FTSH 8, chloroplastic (FTSH8).